We begin with the raw amino-acid sequence, 431 residues long: Probable 3-hydroxy-3-methylglutaryl-coenzyme A reductase (431 aa).

Catalysis depends on charge relay system residues Glu85 and Asp278. His375 acts as the Proton donor in catalysis.

It belongs to the HMG-CoA reductase family.

It catalyses the reaction (R)-mevalonate + 2 NAD(+) + CoA = (3S)-3-hydroxy-3-methylglutaryl-CoA + 2 NADH + 2 H(+). It participates in metabolic intermediate metabolism; (R)-mevalonate degradation; (S)-3-hydroxy-3-methylglutaryl-CoA from (R)-mevalonate: step 1/1. Converts HMG-CoA to mevalonate. The chain is Probable 3-hydroxy-3-methylglutaryl-coenzyme A reductase from Borreliella burgdorferi (strain ATCC 35210 / DSM 4680 / CIP 102532 / B31) (Borrelia burgdorferi).